Consider the following 502-residue polypeptide: Hippocampus abundant transcript-like protein 1 (502 aa).

The span at 1–12 shows a compositional bias: basic and acidic residues; it reads MNAEPPEEKAAS. The disordered stretch occupies residues 1 to 27; the sequence is MNAEPPEEKAASEAEAGAMPEKRAGSR. Residues 1 to 46 are Extracellular-facing; the sequence is MNAEPPEEKAASEAEAGAMPEKRAGSRAAGGNSLQGFGRPSVYHAA. A helical membrane pass occupies residues 47–67; sequence IVIFLEFFAWGLLTTSMLTVL. Residues 68-79 are Cytoplasmic-facing; the sequence is HETFPQHTFLMN. Residues 80–100 form a helical membrane-spanning segment; it reads GLIQGVKGLLSFLSAPLIGAL. The Extracellular portion of the chain corresponds to 101–108; sequence SDVWGRKP. Residues 109 to 129 form a helical membrane-spanning segment; the sequence is FLLGTVFFTCFPIPLMRISPW. Over 130 to 131 the chain is Cytoplasmic; that stretch reads WY. The helical transmembrane segment at 132-152 threads the bilayer; that stretch reads FAMISISGVFSVTFSVIFAYV. Residues 153 to 165 are Extracellular-facing; that stretch reads ADVTQEHERSTAY. The helical transmembrane segment at 166-186 threads the bilayer; that stretch reads GWVSATFAASLVSSPAIGAYL. Over 187–193 the chain is Cytoplasmic; that stretch reads SASYGDS. Residues 194-214 form a helical membrane-spanning segment; the sequence is LVVLVATVVALLDICFILLAV. Topologically, residues 215 to 248 are extracellular; the sequence is PESLPEKMRPLSWGARISWKQADPFASLKKVGKD. The chain crosses the membrane as a helical span at residues 249–269; it reads STILLICITVFLSYLPEAGQY. The Cytoplasmic segment spans residues 270 to 278; that stretch reads SSFFLYLRQ. A helical membrane pass occupies residues 279–299; that stretch reads VIGFGSIKIAAFIAMVGILSI. Over 300–316 the chain is Extracellular; the sequence is VAQTVFLTSLMRSLGNK. A helical membrane pass occupies residues 317–337; that stretch reads NTVLLGLGFQMFQLAWYGFGS. A topological domain (cytoplasmic) is located at residue Gln-338. Residues 339 to 359 traverse the membrane as a helical segment; that stretch reads AWMMWAAGIVAAVSSITFPAV. The Extracellular segment spans residues 360–384; it reads STLVSQNADSNQQGVAQGIITGIRG. Residues 385–405 form a helical membrane-spanning segment; the sequence is LCNGLGPALYGFIFYMFHVEL. At 406 to 425 the chain is on the cytoplasmic side; that stretch reads TELEPELISNNAALQGAVIP. A helical transmembrane segment spans residues 426-446; the sequence is GPPFLFGACIVFMSFLVAVFI. At 447 to 502 the chain is on the extracellular side; it reads PEYSKGGIQKHSNSISGSLANTPERGSDEDIEPLLQDSSIWELSSLEEPGHQCTEL.

This sequence belongs to the major facilitator superfamily.

Its subcellular location is the membrane. The polypeptide is Hippocampus abundant transcript-like protein 1 (Bos taurus (Bovine)).